Here is a 290-residue protein sequence, read N- to C-terminus: Glycine--tRNA ligase alpha subunit (290 aa).

Belongs to the class-II aminoacyl-tRNA synthetase family. In terms of assembly, tetramer of two alpha and two beta subunits.

It localises to the cytoplasm. The enzyme catalyses tRNA(Gly) + glycine + ATP = glycyl-tRNA(Gly) + AMP + diphosphate. The protein is Glycine--tRNA ligase alpha subunit of Syntrophobacter fumaroxidans (strain DSM 10017 / MPOB).